A 238-amino-acid chain; its full sequence is Urease accessory protein UreF (238 aa).

It belongs to the UreF family. In terms of assembly, ureD, UreF and UreG form a complex that acts as a GTP-hydrolysis-dependent molecular chaperone, activating the urease apoprotein by helping to assemble the nickel containing metallocenter of UreC. The UreE protein probably delivers the nickel.

It localises to the cytoplasm. Functionally, required for maturation of urease via the functional incorporation of the urease nickel metallocenter. The protein is Urease accessory protein UreF of Rhodopseudomonas palustris (strain BisA53).